A 289-amino-acid polypeptide reads, in one-letter code: ATP synthase gamma chain (289 aa).

It belongs to the ATPase gamma chain family. F-type ATPases have 2 components, CF(1) - the catalytic core - and CF(0) - the membrane proton channel. CF(1) has five subunits: alpha(3), beta(3), gamma(1), delta(1), epsilon(1). CF(0) has three main subunits: a, b and c.

Its subcellular location is the cell inner membrane. Its function is as follows. Produces ATP from ADP in the presence of a proton gradient across the membrane. The gamma chain is believed to be important in regulating ATPase activity and the flow of protons through the CF(0) complex. This Mannheimia succiniciproducens (strain KCTC 0769BP / MBEL55E) protein is ATP synthase gamma chain.